We begin with the raw amino-acid sequence, 653 residues long: Multidomain regulatory protein MT1410 (653 aa).

The 57-residue stretch at 86 to 142 folds into the PAC domain; sequence SGSEWRLQTDYDGSGVEERYFDFVVTPRRRADGSIEGVQLIVDDVTSRVRARQAAEA. A PPM-type phosphatase domain is found at 177 to 396; that stretch reads DIAAEYLVAA…DDVTLLAMQR (220 aa). Residues D211, V212, D328, and D387 each coordinate Mn(2+). An anti-sigma factor kinase region region spans residues 397–544; the sequence is RAPTPPLHIT…TMVRRAAFQQ (148 aa). In terms of domain architecture, STAS spans 546-653; the sequence is IDSEFVSLVE…ADTEDIFAQE (108 aa). S600 is modified (phosphoserine).

Requires Mg(2+) as cofactor. The cofactor is Mn(2+). Post-translationally, autophosphorylated.

It carries out the reaction O-phospho-L-seryl-[protein] + H2O = L-seryl-[protein] + phosphate. The enzyme catalyses O-phospho-L-threonyl-[protein] + H2O = L-threonyl-[protein] + phosphate. It catalyses the reaction L-seryl-[protein] + ATP = O-phospho-L-seryl-[protein] + ADP + H(+). The catalysed reaction is L-threonyl-[protein] + ATP = O-phospho-L-threonyl-[protein] + ADP + H(+). Primarily acts as an independent SigF regulator that is sensitive to the osmosensory signal, mediating the cross talk of PknD with the SigF regulon. Possesses both phosphatase and kinase activities. The kinase domain functions as a classic anti-sigma factor-like kinase to phosphorylate the anti-anti-sigma factor domain at the canonical regulatory site, and the phosphatase domain antagonizes this activity. This is Multidomain regulatory protein MT1410 from Mycobacterium tuberculosis (strain CDC 1551 / Oshkosh).